Here is a 51-residue protein sequence, read N- to C-terminus: UPF0337 protein NE0131 (51 aa).

It belongs to the UPF0337 (CsbD) family.

In Nitrosomonas europaea (strain ATCC 19718 / CIP 103999 / KCTC 2705 / NBRC 14298), this protein is UPF0337 protein NE0131.